Here is a 104-residue protein sequence, read N- to C-terminus: Inner membrane protein YjcH (104 aa).

Topologically, residues 1 to 24 (MNGTIYQRIEDNAHFRELVEKRQR) are cytoplasmic. Residues 25 to 47 (FATILSIIMLAVYIGFILLIAFA) form a helical membrane-spanning segment. The Periplasmic segment spans residues 48–61 (PGWLGTPLNPNTSV). A helical membrane pass occupies residues 62-84 (TRGIPIGVGVIVISFVLTGIYIW). The Cytoplasmic segment spans residues 85–104 (RANGEFDRLNNEVLHEVQAS).

Its subcellular location is the cell inner membrane. This chain is Inner membrane protein YjcH (yjcH), found in Escherichia coli (strain K12).